Reading from the N-terminus, the 540-residue chain is L-aspartate oxidase (540 aa).

Residues 16 to 19 (SGAA), lysine 38, 45 to 52 (STFYAQGG), 161 to 162 (NA), and aspartate 223 contribute to the FAD site. Residues histidine 244 and 259-260 (TE) each bind succinate. Arginine 290 serves as the catalytic Proton donor/acceptor. Glutamate 375 is a binding site for FAD. Succinate is bound at residue serine 389. 391–392 (SL) contributes to the FAD binding site.

It belongs to the FAD-dependent oxidoreductase 2 family. NadB subfamily. In terms of assembly, monomer. Homodimer. Both the monomeric and dimeric forms of the enzyme are catalytically active. FAD is required as a cofactor.

Its subcellular location is the cytoplasm. The enzyme catalyses L-aspartate + O2 = iminosuccinate + H2O2. It carries out the reaction fumarate + L-aspartate = iminosuccinate + succinate. It participates in cofactor biosynthesis; NAD(+) biosynthesis; iminoaspartate from L-aspartate (oxidase route): step 1/1. Its activity is regulated as follows. Inhibited by the product iminoaspartate. Competitively inhibited by mesotartrate. NAD acts as a competitive inhibitor to FAD. Inhibited by iodoacetic acid, diethylpyrocarbonate and tetranitromethane. Catalyzes the oxidation of L-aspartate to iminoaspartate, the first step in the de novo biosynthesis of NAD(+). Can use either oxygen or fumarate as electron acceptors, which allows the enzyme to be functional under aerobic and anaerobic conditions. In vivo, fumarate is used under anaerobic conditions, and oxygen is the predominant electron acceptor under aerobic conditions due to the lower fumarate levels. In vitro, fumarate is a more efficient electron acceptor and is kinetically superior to oxygen. The chain is L-aspartate oxidase from Escherichia coli (strain K12).